Consider the following 46-residue polypeptide: Protein PsbN (46 aa).

Residues Ile-10 to Phe-30 traverse the membrane as a helical segment.

This sequence belongs to the PsbN family.

It is found in the cellular thylakoid membrane. Its function is as follows. May play a role in photosystem I and II biogenesis. In Prochlorococcus marinus (strain SARG / CCMP1375 / SS120), this protein is Protein PsbN.